The primary structure comprises 177 residues: R-phycoerythrin beta chain (177 aa).

Phycourobilin is bound by residues Cys50 and Cys61. At Asn72 the chain carries N4-methylasparagine. (2R,3E)-phycoerythrobilin contacts are provided by Cys82 and Cys158.

Belongs to the phycobiliprotein family. As to quaternary structure, heterodimer of an alpha and a beta chain. In terms of processing, contains two covalently linked phycoerythrobilin chromophores and one covalently linked phycourobilin chromophore.

It localises to the plastid. Its subcellular location is the chloroplast thylakoid membrane. In terms of biological role, light-harvesting photosynthetic bile pigment-protein from the phycobiliprotein complex. This is R-phycoerythrin beta chain (cpeB) from Porphyra purpurea (Red seaweed).